Here is a 187-residue protein sequence, read N- to C-terminus: Probable chemoreceptor glutamine deamidase CheD (187 aa).

Residues 164 to 187 are disordered; it reads APQDVRRPTPPPMPAVASGDVDLF.

It belongs to the CheD family.

It carries out the reaction L-glutaminyl-[protein] + H2O = L-glutamyl-[protein] + NH4(+). In terms of biological role, probably deamidates glutamine residues to glutamate on methyl-accepting chemotaxis receptors (MCPs), playing an important role in chemotaxis. The sequence is that of Probable chemoreceptor glutamine deamidase CheD from Caulobacter vibrioides (strain ATCC 19089 / CIP 103742 / CB 15) (Caulobacter crescentus).